The sequence spans 226 residues: Regulator of microtubule dynamics protein 1 (226 aa).

Belongs to the FAM82/RMD family. Interacts with air-2.

It is found in the cytoplasm. The protein resides in the cytoskeleton. The protein localises to the spindle pole. Its function is as follows. Acts in chromosome segregation and organization during mitosis. The protein is Regulator of microtubule dynamics protein 1 (rmd-1) of Caenorhabditis elegans.